We begin with the raw amino-acid sequence, 413 residues long: UPF0754 membrane protein PCC7424_0748 (413 aa).

Helical transmembrane passes span 3–23 (IALE…GAII) and 391–411 (IVNL…VILL).

The protein belongs to the UPF0754 family.

It localises to the cell inner membrane. The polypeptide is UPF0754 membrane protein PCC7424_0748 (Gloeothece citriformis (strain PCC 7424) (Cyanothece sp. (strain PCC 7424))).